A 217-amino-acid polypeptide reads, in one-letter code: Small ribosomal subunit protein uS3 (217 aa).

In terms of domain architecture, KH type-2 spans 29–97 (ADYLHEDLAI…AQLNKLTGKQ (69 aa)).

This sequence belongs to the universal ribosomal protein uS3 family. Part of the 30S ribosomal subunit. Forms a tight complex with proteins S10 and S14.

In terms of biological role, binds the lower part of the 30S subunit head. Binds mRNA in the 70S ribosome, positioning it for translation. This Streptococcus mutans serotype c (strain ATCC 700610 / UA159) protein is Small ribosomal subunit protein uS3.